An 814-amino-acid polypeptide reads, in one-letter code: DNA replication licensing factor Mcm6 (814 aa).

The C4-type zinc-finger motif lies at 152-179 (CLDCQTEIRDVEQQFKFTNPTICRNPVC). An MCM domain is found at 339–545 (LYQNLINSLF…VVDYAIARKI (207 aa)). Residues S392, T393, A394, K395, S396, and N497 each contribute to the ATP site. The Arginine finger signature appears at 521–524 (SRFD). ADP contacts are provided by R612 and E615. The segment at 656–696 (DIHLDEEEGEENENVMDIGEETPEDTPRTNETEENDQDTPA) is disordered. The span at 659–679 (LDEEEGEENENVMDIGEETPE) shows a compositional bias: acidic residues.

Belongs to the MCM family. As to quaternary structure, component of the Mcm2-7 complex. The complex forms a toroidal hexameric ring with the proposed subunit order Mcm2-Mcm6-Mcm4-Mcm7-Mcm3-Mcm5 (By simililarity). The heterodimers of Mcm4/Mcm6 and Mcm3/Mcm5 interact with Mcm2 and Mcm7.

The protein localises to the nucleus. The enzyme catalyses ATP + H2O = ADP + phosphate + H(+). Its function is as follows. Acts as a component of the MCM2-7 complex (MCM complex) which is the replicative helicase essential for 'once per cell cycle' DNA replication initiation and elongation in eukaryotic cells. Core component of CDC45-MCM-GINS (CMG) helicase, the molecular machine that unwinds template DNA during replication, and around which the replisome is built. The active ATPase sites in the MCM2-7 ring are formed through the interaction surfaces of two neighboring subunits such that a critical structure of a conserved arginine finger motif is provided in trans relative to the ATP-binding site of the Walker A box of the adjacent subunit. The six ATPase active sites, however, are likely to contribute differentially to the complex helicase activity. The chain is DNA replication licensing factor Mcm6 from Anopheles gambiae (African malaria mosquito).